The following is a 275-amino-acid chain: NH(3)-dependent NAD(+) synthetase (275 aa).

50–57 (GISGGVDS) provides a ligand contact to ATP. D56 serves as a coordination point for Mg(2+). R147 is a deamido-NAD(+) binding site. T167 provides a ligand contact to ATP. E172 provides a ligand contact to Mg(2+). Deamido-NAD(+) contacts are provided by K180 and D187. Residues K196 and T218 each contribute to the ATP site. Residue 267–268 (HK) participates in deamido-NAD(+) binding.

This sequence belongs to the NAD synthetase family. As to quaternary structure, homodimer.

The catalysed reaction is deamido-NAD(+) + NH4(+) + ATP = AMP + diphosphate + NAD(+) + H(+). The protein operates within cofactor biosynthesis; NAD(+) biosynthesis; NAD(+) from deamido-NAD(+) (ammonia route): step 1/1. Catalyzes the ATP-dependent amidation of deamido-NAD to form NAD. Uses ammonia as a nitrogen source. In Pseudomonas aeruginosa (strain UCBPP-PA14), this protein is NH(3)-dependent NAD(+) synthetase.